Here is a 54-residue protein sequence, read N- to C-terminus: Small ribosomal subunit protein uS14 (54 aa).

Zn(2+)-binding residues include Cys19, Cys22, Cys37, and Cys40.

Belongs to the universal ribosomal protein uS14 family. Zinc-binding uS14 subfamily. Part of the 30S ribosomal subunit. Requires Zn(2+) as cofactor.

Binds 16S rRNA, required for the assembly of 30S particles. The polypeptide is Small ribosomal subunit protein uS14 (Sulfurisphaera tokodaii (strain DSM 16993 / JCM 10545 / NBRC 100140 / 7) (Sulfolobus tokodaii)).